A 485-amino-acid polypeptide reads, in one-letter code: Glutamyl-tRNA(Gln) amidotransferase subunit A (485 aa).

Active-site charge relay system residues include Lys-76 and Ser-151. Ser-175 functions as the Acyl-ester intermediate in the catalytic mechanism.

This sequence belongs to the amidase family. GatA subfamily. Heterotrimer of A, B and C subunits.

The catalysed reaction is L-glutamyl-tRNA(Gln) + L-glutamine + ATP + H2O = L-glutaminyl-tRNA(Gln) + L-glutamate + ADP + phosphate + H(+). Its function is as follows. Allows the formation of correctly charged Gln-tRNA(Gln) through the transamidation of misacylated Glu-tRNA(Gln) in organisms which lack glutaminyl-tRNA synthetase. The reaction takes place in the presence of glutamine and ATP through an activated gamma-phospho-Glu-tRNA(Gln). In Pelagibacter ubique (strain HTCC1062), this protein is Glutamyl-tRNA(Gln) amidotransferase subunit A.